The primary structure comprises 218 residues: Ubiquitin-conjugating enzyme E2-24 kDa (218 aa).

The 146-residue stretch at 3–148 folds into the UBC core domain; it reads SSKRRIETDV…IKEYIDKYAT (146 aa). Cysteine 85 (glycyl thioester intermediate) is an active-site residue. Residues 154 to 218 form a disordered region; the sequence is QMFGGDNDSD…DDDYDEVANQ (65 aa). Composition is skewed to acidic residues over residues 160-183 and 192-218; these read NDSD…EDMD and DSVD…VANQ.

Belongs to the ubiquitin-conjugating enzyme family.

It is found in the cytoplasm. It catalyses the reaction S-ubiquitinyl-[E1 ubiquitin-activating enzyme]-L-cysteine + [E2 ubiquitin-conjugating enzyme]-L-cysteine = [E1 ubiquitin-activating enzyme]-L-cysteine + S-ubiquitinyl-[E2 ubiquitin-conjugating enzyme]-L-cysteine.. Its pathway is protein modification; protein ubiquitination. Functionally, catalyzes the covalent attachment of ubiquitin to other proteins. Required for the adaptation to the presence of glucose in the growth medium; mediates the degradation of enzymes involved in gluconeogenesis when cells are shifted to glucose-containing medium. Required for proteasome-dependent catabolite degradation of fructose-1,6-bisphosphatase (FBP1). In Saccharomyces cerevisiae (strain ATCC 204508 / S288c) (Baker's yeast), this protein is Ubiquitin-conjugating enzyme E2-24 kDa (UBC8).